A 447-amino-acid polypeptide reads, in one-letter code: Glutamate--tRNA ligase 1 (447 aa).

The short motif at 10-20 (PSPTGMLHVGN) is the 'HIGH' region element. Residues 240–244 (KISKR) carry the 'KMSKS' region motif. Residue K243 participates in ATP binding.

It belongs to the class-I aminoacyl-tRNA synthetase family. Glutamate--tRNA ligase type 1 subfamily. As to quaternary structure, monomer.

The protein localises to the cytoplasm. It carries out the reaction tRNA(Glu) + L-glutamate + ATP = L-glutamyl-tRNA(Glu) + AMP + diphosphate. Functionally, catalyzes the attachment of glutamate to tRNA(Glu) in a two-step reaction: glutamate is first activated by ATP to form Glu-AMP and then transferred to the acceptor end of tRNA(Glu). The polypeptide is Glutamate--tRNA ligase 1 (Rickettsia akari (strain Hartford)).